The primary structure comprises 164 residues: Putative anionic 4-hydroxy-benzoate permease (164 aa).

The disordered stretch occupies residues 1-30 (CGRRRGSLAWPDASSPSANPRPGAGAAESS). 3 consecutive transmembrane segments (helical) span residues 62 to 82 (LWVACFGFGTGACIILALMFM), 97 to 117 (GMAQCVGYLLAAFGPPLVGGL), and 126 to 146 (PALTVCLVLSLTMAAAGMLAG).

It belongs to the major facilitator superfamily. Cyanate porter (TC 2.A.1.17) family.

The protein resides in the cell membrane. Functionally, may be involved in uptake of anionic 4-hydroxy-benzoate. In Thauera aromatica, this protein is Putative anionic 4-hydroxy-benzoate permease.